The primary structure comprises 1455 residues: DNA-directed RNA polymerase subunit beta (1455 aa).

The protein belongs to the RNA polymerase beta chain family. In terms of assembly, the RNAP catalytic core consists of 2 alpha, 1 beta, 1 beta' and 1 omega subunit. When a sigma factor is associated with the core the holoenzyme is formed, which can initiate transcription.

It carries out the reaction RNA(n) + a ribonucleoside 5'-triphosphate = RNA(n+1) + diphosphate. Functionally, DNA-dependent RNA polymerase catalyzes the transcription of DNA into RNA using the four ribonucleoside triphosphates as substrates. This is DNA-directed RNA polymerase subunit beta from Rhizorhabdus wittichii (strain DSM 6014 / CCUG 31198 / JCM 15750 / NBRC 105917 / EY 4224 / RW1) (Sphingomonas wittichii).